The sequence spans 29 residues: TCLARDELCGASFLSNFLCCDGLCLLICV.

Disulfide bonds link cysteine 2/cysteine 20, cysteine 9/cysteine 24, and cysteine 19/cysteine 28.

As to expression, expressed by the venom duct.

It is found in the secreted. Its function is as follows. Intraperitoneal injection into fish (1 nmol) provokes hyperactivity and erratic swimming in various directions after 14 minutes. The polypeptide is Conotoxin pr6a (Conus parius (Cone snail)).